Reading from the N-terminus, the 1052-residue chain is Membrane-bound transcription factor site-1 protease (1052 aa).

The signal sequence occupies residues 1 to 17; that stretch reads MKLVNIWLLLLVVLLCG. Positions 18–186 are excised as a propeptide; that stretch reads KKHLGDRLEK…TGRHSSRRLL (169 aa). Ser-168 bears the Phosphoserine; by FAM20C mark. The Lumenal portion of the chain corresponds to 187 to 998; sequence RAIPRQVAQT…IMPGRYNQEV (812 aa). Residues 190–472 form the Peptidase S8 domain; that stretch reads PRQVAQTLQA…HGKLDLLRAY (283 aa). The active-site Charge relay system is Asp-218. The N-linked (GlcNAc...) asparagine glycan is linked to Asn-236. His-249 (charge relay system) is an active-site residue. The N-linked (GlcNAc...) asparagine glycan is linked to Asn-305. Ser-414 serves as the catalytic Charge relay system. N-linked (GlcNAc...) asparagine glycans are attached at residues Asn-515 and Asn-728. Polar residues predominate over residues 877–887; sequence PSLSHSGNRQR. The interval 877 to 899 is disordered; the sequence is PSLSHSGNRQRPPSGAGSVTPER. Residue Asn-939 is glycosylated (N-linked (GlcNAc...) asparagine). Residues 999 to 1021 form a helical membrane-spanning segment; that stretch reads GQTIPVFAFLGAMVVLAFFVVQI. Residues 1022–1052 are Cytoplasmic-facing; the sequence is NKAKSRPKRRKPRVKRPQLMQQVHPPKTPSV. The segment covering 1027–1037 has biased composition (basic residues); that stretch reads RPKRRKPRVKR. A disordered region spans residues 1027 to 1052; it reads RPKRRKPRVKRPQLMQQVHPPKTPSV.

The protein belongs to the peptidase S8 family. In terms of assembly, interacts with LYSET; this interaction bridges GNPTAB to MBTPS1. Ca(2+) serves as cofactor. The 148 kDa zymogen is processed progressively into two membrane-bound 120 and 106 kDa forms in the endoplasmic reticulum, and late into a secreted 98 kDa form. The propeptide is autocatalytically removed through an intramolecular cleavage after Leu-186. Further cleavage generates 14, 10, and 8 kDa intermediates. Widely expressed.

It is found in the endoplasmic reticulum membrane. The protein resides in the golgi apparatus membrane. It carries out the reaction Processes precursors containing basic and hydrophobic/aliphatic residues at P4 and P2, respectively, with a relatively relaxed acceptance of amino acids at P1 and P3.. With respect to regulation, inhibited by divalent copper and zinc ions, but not by nickel or cobalt. Inhibited by its prosegment, but not smaller fragments. Inhibited by 4-(2-aminoethyl)benzenesulfonyl fluoride (AEBSF), a serine protease inhibitor. Serine protease that cleaves after hydrophobic or small residues, provided that Arg or Lys is in position P4: known substrates include SREBF1/SREBP1, SREBF2/SREBP2, BDNF, GNPTAB, ATF6, ATF6B and FAM20C. Cleaves substrates after Arg-Ser-Val-Leu (SREBP2), Arg-His-Leu-Leu (ATF6), Arg-Gly-Leu-Thr (BDNF) and its own propeptide after Arg-Arg-Leu-Leu. Catalyzes the first step in the proteolytic activation of the sterol regulatory element-binding proteins (SREBPs) SREBF1/SREBP1 and SREBF2/SREBP2. Also mediates the first step in the proteolytic activation of the cyclic AMP-dependent transcription factor ATF-6 (ATF6 and ATF6B). Mediates the protein cleavage of GNPTAB into subunit alpha and beta, thereby participating in biogenesis of lysosomes. Cleaves the propeptide from FAM20C which is required for FAM20C secretion from the Golgi apparatus membrane and for enhancement of FAM20C kinase activity, promoting osteoblast differentiation and biomineralization. Involved in the regulation of M6P-dependent Golgi-to-lysosome trafficking of lysosomal enzymes. It is required for the activation of CREB3L2/BBF2H7, a transcriptional activator of MIA3/TANGO and other genes controlling mega vesicle formation. Therefore, it plays a key role in the regulation of mega vesicle-mediated collagen trafficking. In astrocytes and osteoblasts, upon DNA damage and ER stress, mediates the first step of the regulated intramembrane proteolytic activation of the transcription factor CREB3L1, leading to the inhibition of cell-cycle progression. In Homo sapiens (Human), this protein is Membrane-bound transcription factor site-1 protease.